The chain runs to 45 residues: Enterotoxin (45 aa).

As to quaternary structure, one of 3 components (of 35, 45 and 105 kDa) of the enterotoxin.

Functionally, one of 3 components required for cytotoxicity (tested in African green monkey Vero cells); the complex is not hemolytic. The polypeptide is Enterotoxin (Bacillus cereus).